We begin with the raw amino-acid sequence, 858 residues long: Receptor-like protein kinase ANXUR2 (858 aa).

The N-terminal stretch at 1-27 (MNEKLRILFSFLCFFYVLLVSPSQSNG) is a signal peptide. The Extracellular portion of the chain corresponds to 28–431 (QDISLSCGAS…VKKDFQGDKR (404 aa)). Asparagine 133, asparagine 293, asparagine 303, and asparagine 331 each carry an N-linked (GlcNAc...) asparagine glycan. A helical membrane pass occupies residues 432–452 (ITAFVIGSAGGVAAVLFCALC). Residues 453 to 858 (FTMYQRKRKF…FSQIVNPKGR (406 aa)) lie on the Cytoplasmic side of the membrane. The Protein kinase domain maps to 521-794 (FDESNVIGVG…GDVLWNLEFA (274 aa)). Residues 527–535 (IGVGGFGKV) and lysine 549 contribute to the ATP site. Aspartate 645 (proton acceptor) is an active-site residue. Residues 800-858 (TADGSRHRTPSNGGGSVDLGGGGGGVTVNISAGESDLGDDLSSEENSGIFSQIVNPKGR) form a disordered region. Over residues 811-825 (NGGGSVDLGGGGGGV) the composition is skewed to gly residues. A compositionally biased stretch (polar residues) spans 843-858 (EENSGIFSQIVNPKGR).

This sequence belongs to the protein kinase superfamily. Ser/Thr protein kinase family. As to expression, expressed in pollen, but not in pistils or seedlings.

The protein localises to the cell membrane. It catalyses the reaction L-seryl-[protein] + ATP = O-phospho-L-seryl-[protein] + ADP + H(+). It carries out the reaction L-threonyl-[protein] + ATP = O-phospho-L-threonyl-[protein] + ADP + H(+). Functionally, receptor-like protein kinase that controls pollen tube behavior by directing rupture at proper timing to release the sperm cell. In Arabidopsis thaliana (Mouse-ear cress), this protein is Receptor-like protein kinase ANXUR2 (ANX2).